The sequence spans 488 residues: Mannitol 2-dehydrogenase (488 aa).

37 to 48 (IVHVGVGGFHRA) is an NAD(+) binding site.

Belongs to the mannitol dehydrogenase family. Monomer.

It carries out the reaction D-mannitol + NAD(+) = D-fructose + NADH + H(+). Its function is as follows. Catalyzes the NAD(H)-dependent interconversion of D-fructose and D-mannitol in the mannitol metabolic pathway. This Aspergillus niger (strain ATCC MYA-4892 / CBS 513.88 / FGSC A1513) protein is Mannitol 2-dehydrogenase.